Consider the following 663-residue polypeptide: Probable receptor-like protein kinase At1g49730 (663 aa).

A signal peptide spans 1 to 25; the sequence is MVVNSQAFLLALIALLATQLPSLMA. Residues 26 to 254 lie on the Extracellular side of the membrane; that stretch reads ADCPLDFSGS…TNPYHLTMVP (229 aa). Asn36, Asn46, Asn70, Asn101, and Asn171 each carry an N-linked (GlcNAc...) asparagine glycan. Positions 213-243 are disordered; sequence SFSPVASPEPSPSTVGGISPSNSDSQMTTSR. A compositionally biased stretch (polar residues) spans 224-243; the sequence is PSTVGGISPSNSDSQMTTSR. Residues 255 to 275 form a helical membrane-spanning segment; that stretch reads TIGIVVTAVALTMLVVLVILI. The Cytoplasmic portion of the chain corresponds to 276 to 663; that stretch reads RRKNRELDES…PHSPINGFSF (388 aa). Residues 327 to 609 enclose the Protein kinase domain; it reads NDFNTVIGQG…ESCDPVHSAF (283 aa). Residues 333–341 and Lys355 each bind ATP; that span reads IGQGGFGTV. The active-site Proton acceptor is Asp451. The disordered stretch occupies residues 631–663; the sequence is RGDSRIFGPSSSTTSRSHYSRSLPHSPINGFSF. Low complexity predominate over residues 640–652; it reads SSSTTSRSHYSRS.

Belongs to the protein kinase superfamily. Ser/Thr protein kinase family.

The protein localises to the cell membrane. It carries out the reaction L-seryl-[protein] + ATP = O-phospho-L-seryl-[protein] + ADP + H(+). The catalysed reaction is L-threonyl-[protein] + ATP = O-phospho-L-threonyl-[protein] + ADP + H(+). The chain is Probable receptor-like protein kinase At1g49730 from Arabidopsis thaliana (Mouse-ear cress).